We begin with the raw amino-acid sequence, 122 residues long: Large ribosomal subunit protein bL19c (122 aa).

The protein belongs to the bacterial ribosomal protein bL19 family.

Its subcellular location is the plastid. It is found in the chloroplast. This is Large ribosomal subunit protein bL19c (rpl19) from Rhodomonas salina (Cryptomonas salina).